The chain runs to 162 residues: Photosystem II extrinsic protein V (162 aa).

The first 26 residues, 1-26, serve as a signal peptide directing secretion; it reads MLKRYMLLAVATVFFAFQVLTSTATA. Heme c contacts are provided by Cys-62, Cys-65, His-66, and His-117.

The protein belongs to the cytochrome c family. PsbV subfamily. PSII is composed of 1 copy each of membrane proteins PsbA, PsbB, PsbC, PsbD, PsbE, PsbF, PsbH, PsbI, PsbJ, PsbK, PsbL, PsbM, PsbT, PsbX, PsbY, PsbZ, Psb30/Ycf12, peripheral proteins PsbO, CyanoQ (PsbQ), PsbU, PsbV and a large number of cofactors. It forms dimeric complexes. Heme c is required as a cofactor.

It is found in the cellular thylakoid membrane. In terms of biological role, one of the extrinsic, lumenal subunits of photosystem II (PSII). PSII is a light-driven water plastoquinone oxidoreductase, using light energy to abstract electrons from H(2)O, generating a proton gradient subsequently used for ATP formation. The extrinsic proteins stabilize the structure of photosystem II oxygen-evolving complex (OEC), the ion environment of oxygen evolution and protect the OEC against heat-induced inactivation. Low-potential cytochrome c that plays a role in the OEC of PSII. The chain is Photosystem II extrinsic protein V from Acaryochloris marina (strain MBIC 11017).